The chain runs to 350 residues: Histidinol-phosphate aminotransferase (350 aa).

Lys209 carries the post-translational modification N6-(pyridoxal phosphate)lysine.

It belongs to the class-II pyridoxal-phosphate-dependent aminotransferase family. Histidinol-phosphate aminotransferase subfamily. Homodimer. The cofactor is pyridoxal 5'-phosphate.

The enzyme catalyses L-histidinol phosphate + 2-oxoglutarate = 3-(imidazol-4-yl)-2-oxopropyl phosphate + L-glutamate. Its pathway is amino-acid biosynthesis; L-histidine biosynthesis; L-histidine from 5-phospho-alpha-D-ribose 1-diphosphate: step 7/9. In Christiangramia forsetii (strain DSM 17595 / CGMCC 1.15422 / KT0803) (Gramella forsetii), this protein is Histidinol-phosphate aminotransferase.